The sequence spans 393 residues: Riboflavin biosynthesis protein RibBA (393 aa).

The DHBP synthase stretch occupies residues M1–A200. Residues R27–E28, D32, R139–T143, and E163 each bind D-ribulose 5-phosphate. Position 28 (E28) interacts with Mg(2+). H142 is a binding site for Mg(2+). The tract at residues V201–I393 is GTP cyclohydrolase II. R249 to A253 is a GTP binding site. Zn(2+) contacts are provided by C254, C265, and C267. GTP contacts are provided by residues Q270, E291–R293, and T313. Catalysis depends on D325, which acts as the Proton acceptor; for GTP cyclohydrolase activity. The active-site Nucleophile; for GTP cyclohydrolase activity is the R327. 2 residues coordinate GTP: S348 and K353.

It in the N-terminal section; belongs to the DHBP synthase family. The protein in the C-terminal section; belongs to the GTP cyclohydrolase II family. Mg(2+) serves as cofactor. The cofactor is Mn(2+). Zn(2+) is required as a cofactor.

It catalyses the reaction D-ribulose 5-phosphate = (2S)-2-hydroxy-3-oxobutyl phosphate + formate + H(+). It carries out the reaction GTP + 4 H2O = 2,5-diamino-6-hydroxy-4-(5-phosphoribosylamino)-pyrimidine + formate + 2 phosphate + 3 H(+). It participates in cofactor biosynthesis; riboflavin biosynthesis; 2-hydroxy-3-oxobutyl phosphate from D-ribulose 5-phosphate: step 1/1. Its pathway is cofactor biosynthesis; riboflavin biosynthesis; 5-amino-6-(D-ribitylamino)uracil from GTP: step 1/4. Functionally, catalyzes the conversion of D-ribulose 5-phosphate to formate and 3,4-dihydroxy-2-butanone 4-phosphate. Its function is as follows. Catalyzes the conversion of GTP to 2,5-diamino-6-ribosylamino-4(3H)-pyrimidinone 5'-phosphate (DARP), formate and pyrophosphate. The sequence is that of Riboflavin biosynthesis protein RibBA from Staphylococcus epidermidis (strain ATCC 35984 / DSM 28319 / BCRC 17069 / CCUG 31568 / BM 3577 / RP62A).